Here is a 419-residue protein sequence, read N- to C-terminus: D(4) dopamine receptor (419 aa).

Residues 1–29 (MGNRSTADADGLLAGRGPAAGASAGASAG) lie on the Extracellular side of the membrane. An N-linked (GlcNAc...) asparagine glycan is attached at Asn-3. A helical transmembrane segment spans residues 30–50 (LAGQGAAALVGGVLLIGAVLA). At 51–71 (GNSLVCVSVATERALQTPTNS) the chain is on the cytoplasmic side. A helical transmembrane segment spans residues 72-92 (FIVSLAAADLLLALLVLPLFV). Asp-80 is a Na(+) binding site. The Extracellular segment spans residues 93-110 (YSEVQGGAWLLSPRLCDA). A disulfide bridge links Cys-108 with Cys-185. Residues 111 to 131 (LMAMDVMLCTASIFNLCAISV) form a helical membrane-spanning segment. Asp-115 contributes to the (2R,3R)-nemonapride binding site. A Na(+)-binding site is contributed by Ser-122. Over 132 to 152 (DRFVAVAVPLRYNRQGGSRRQ) the chain is Cytoplasmic. A helical transmembrane segment spans residues 153 to 173 (LLLIGATWLLSAAVAAPVLCG). The Extracellular segment spans residues 174 to 192 (LNDVRGRDPAVCRLEDRDY). Residues 193-213 (VVYSSVCSFFLPCPLMLLLYW) traverse the membrane as a helical segment. Ser-196 serves as a coordination point for (2R,3R)-nemonapride. At 214–346 (ATFRGLQRWE…ITGRERKAMR (133 aa)) the chain is on the cytoplasmic side. The segment at 230 to 264 (LHGRAPRRPSGPGPPSPTPPAPRLPQDPCGPDCAP) is disordered. Residues 238-254 (PSGPGPPSPTPPAPRLP) are compositionally biased toward pro residues. Residues 249-264 (PAPRLPQDPCGPDCAP) form a 1; approximate repeat. The segment at 249–312 (PAPRLPQDPC…PDPCGSNCAP (64 aa)) is 4 X 16 AA approximate tandem repeats of [PA]-A-P-G-L-P-[PQR]-[DG]-P-C-G-P-D-C-A-P. 2 consecutive repeat copies span residues 265–280 (PAPG…DCAP) and 281–296 (AAPS…DCAP). Residues 297–312 (PAPGLPPDPCGSNCAP) form a 4; approximate repeat. Residues 317–336 (RAAALPPQTPPQTRRRRRAK) form a disordered region. A helical membrane pass occupies residues 347–367 (VLPVVVGAFLLCWTPFFVVHI). The Extracellular segment spans residues 368–382 (TQALCPACSVPPRLV). A disulfide bridge links Cys-372 with Cys-375. A helical transmembrane segment spans residues 383–403 (SAVTWLGYVNSALNPVIYTVF). The Cytoplasmic segment spans residues 404-419 (NAEFRNVFRKALRACC). Cys-419 carries S-palmitoyl cysteine lipidation.

The protein belongs to the G-protein coupled receptor 1 family. In terms of assembly, forms homo- and heterooligomers with DRD2. D4.7 allele exhibits higher affinity for homodimers compared to DRD2 heterodimers, while alleles D42. and 4.4 have similar affinities for both. The interaction with DRD2 may modulate agonist-induced downstream signaling. Interacts with CLIC6. Interacts with GPRASP1. May interact with ADORA2A. Interacts with KLHL12. In terms of processing, polyubiquitinated by the BCR(KLHL12) E3 ubiquitin ligase complex: polyubiquitination does not lead to degradation of DRD4 protein. Palmitoylated. Palmitoylation of the C-terminal Cys is important for normal expression at the cell membrane. Highly expressed in retina. Detected at much lower levels in brain, in amygdala, thalamus, hypothalamus, cerebellum and pituitary.

It localises to the cell membrane. With respect to regulation, signaling in response to agonists such as dopamine, epinephrine and norepinephrine is modulated by Na(+); lower Na(+) levels result in higher receptor activity (in vitro). Dopamine receptor responsible for neuronal signaling in the mesolimbic system of the brain, an area of the brain that regulates emotion and complex behavior. Activated by dopamine, but also by epinephrine and norepinephrine, and by numerous synthetic agonists and drugs. Agonist binding triggers signaling via G proteins that inhibit adenylyl cyclase. Modulates the circadian rhythm of contrast sensitivity by regulating the rhythmic expression of NPAS2 in the retinal ganglion cells. This chain is D(4) dopamine receptor (DRD4), found in Homo sapiens (Human).